Consider the following 291-residue polypeptide: Acetyl-coenzyme A carboxylase carboxyl transferase subunit beta (291 aa).

Residues 23–291 enclose the CoA carboxyltransferase N-terminal domain; the sequence is VWHKCPSCTA…PPDLPVEESV (269 aa). Positions 27, 30, 46, and 49 each coordinate Zn(2+). Residues 27–49 form a C4-type zinc finger; that stretch reads CPSCTAVLYRVELERNLEVCPKC.

This sequence belongs to the AccD/PCCB family. As to quaternary structure, acetyl-CoA carboxylase is a heterohexamer composed of biotin carboxyl carrier protein (AccB), biotin carboxylase (AccC) and two subunits each of ACCase subunit alpha (AccA) and ACCase subunit beta (AccD). The cofactor is Zn(2+).

It is found in the cytoplasm. It carries out the reaction N(6)-carboxybiotinyl-L-lysyl-[protein] + acetyl-CoA = N(6)-biotinyl-L-lysyl-[protein] + malonyl-CoA. The protein operates within lipid metabolism; malonyl-CoA biosynthesis; malonyl-CoA from acetyl-CoA: step 1/1. Component of the acetyl coenzyme A carboxylase (ACC) complex. Biotin carboxylase (BC) catalyzes the carboxylation of biotin on its carrier protein (BCCP) and then the CO(2) group is transferred by the transcarboxylase to acetyl-CoA to form malonyl-CoA. The protein is Acetyl-coenzyme A carboxylase carboxyl transferase subunit beta of Coxiella burnetii (strain Dugway 5J108-111).